The following is a 335-amino-acid chain: NADH-quinone oxidoreductase subunit H (335 aa).

A run of 8 helical transmembrane segments spans residues 15–35, 81–101, 114–134, 154–174, 187–207, 238–258, 270–290, and 307–327; these read VVKA…LSFV, MIFT…FSII, IGLL…LFAG, VSYE…VGSF, LWFI…GVAV, FFVG…TLFF, QVPF…FILL, and WKFC…IVLY.

Belongs to the complex I subunit 1 family. As to quaternary structure, NDH-1 is composed of 13 different subunits. Subunits NuoA, H, J, K, L, M, N constitute the membrane sector of the complex.

The protein localises to the cell inner membrane. It carries out the reaction a quinone + NADH + 5 H(+)(in) = a quinol + NAD(+) + 4 H(+)(out). In terms of biological role, NDH-1 shuttles electrons from NADH, via FMN and iron-sulfur (Fe-S) centers, to quinones in the respiratory chain. The immediate electron acceptor for the enzyme in this species is believed to be ubiquinone. Couples the redox reaction to proton translocation (for every two electrons transferred, four hydrogen ions are translocated across the cytoplasmic membrane), and thus conserves the redox energy in a proton gradient. This subunit may bind ubiquinone. This is NADH-quinone oxidoreductase subunit H from Pseudomonas putida (strain GB-1).